We begin with the raw amino-acid sequence, 238 residues long: Cysteine-rich venom protein natrin-2 (238 aa).

An N-terminal signal peptide occupies residues 1–19 (MIAFIVLLSLAAVLQQSSG). The 127-residue stretch at 38-164 (VDKHNALRRS…SSKYLYVCQY (127 aa)) folds into the SCP domain. 8 disulfides stabilise this stretch: cysteine 75-cysteine 153, cysteine 92-cysteine 165, cysteine 148-cysteine 162, cysteine 184-cysteine 191, cysteine 187-cysteine 196, cysteine 200-cysteine 233, cysteine 209-cysteine 227, and cysteine 218-cysteine 231. The ShKT domain occupies 200 to 233 (CKHHNVFSNCQSLAKQNACQTEWMKSKCAASCFC).

In terms of tissue distribution, expressed by the venom gland.

Its subcellular location is the secreted. Functionally, inhibits carbachol-induced muscle contraction and weakly blocks muscle contraction evoked by potassium. This chain is Cysteine-rich venom protein natrin-2, found in Naja atra (Chinese cobra).